The sequence spans 311 residues: Ornithine carbamoyltransferase (311 aa).

Carbamoyl phosphate is bound by residues 54–57, Gln-81, Arg-105, and 132–135; these read STRT and HPCQ. Residues Asn-163, Asp-221, and 225–226 contribute to the L-ornithine site; that span reads SM. Carbamoyl phosphate contacts are provided by residues 261 to 262 and Arg-289; that span reads CL.

This sequence belongs to the aspartate/ornithine carbamoyltransferase superfamily. OTCase family.

The protein resides in the cytoplasm. The catalysed reaction is carbamoyl phosphate + L-ornithine = L-citrulline + phosphate + H(+). Its pathway is amino-acid degradation; L-arginine degradation via ADI pathway; carbamoyl phosphate from L-arginine: step 2/2. Its function is as follows. Reversibly catalyzes the transfer of the carbamoyl group from carbamoyl phosphate (CP) to the N(epsilon) atom of ornithine (ORN) to produce L-citrulline. The protein is Ornithine carbamoyltransferase of Azoarcus sp. (strain BH72).